A 233-amino-acid polypeptide reads, in one-letter code: uncharacterized protein (233 aa).

The chain crosses the membrane as a helical span at residues 21–41; sequence LNILIAIVSILIVVVAANLFI. The tract at residues 44–163 is disordered; the sequence is PSSKDVSKDS…GEHAATYDSS (120 aa). 3 stretches are compositionally biased toward basic and acidic residues: residues 48–57, 66–108, and 135–144; these read DVSKDSETAQ, KTEK…KKDD, and DVEKTYENPD.

Its subcellular location is the cell membrane. This is an uncharacterized protein from Bacillus subtilis (strain 168).